We begin with the raw amino-acid sequence, 347 residues long: NADH-quinone oxidoreductase subunit H (347 aa).

Helical transmembrane passes span 13 to 33 (LIMI…IAYI), 82 to 102 (AVFL…WAVV), 115 to 135 (VGIL…IMGG), 161 to 181 (IGLV…TDIV), 198 to 218 (FLDW…ISAL), 258 to 278 (AVVL…LPPV), 286 to 306 (VPGI…FAMV), and 321 to 341 (LGWK…AFVL).

This sequence belongs to the complex I subunit 1 family. In terms of assembly, NDH-1 is composed of 14 different subunits. Subunits NuoA, H, J, K, L, M, N constitute the membrane sector of the complex.

Its subcellular location is the cell inner membrane. It carries out the reaction a quinone + NADH + 5 H(+)(in) = a quinol + NAD(+) + 4 H(+)(out). Its function is as follows. NDH-1 shuttles electrons from NADH, via FMN and iron-sulfur (Fe-S) centers, to quinones in the respiratory chain. The immediate electron acceptor for the enzyme in this species is believed to be ubiquinone. Couples the redox reaction to proton translocation (for every two electrons transferred, four hydrogen ions are translocated across the cytoplasmic membrane), and thus conserves the redox energy in a proton gradient. This subunit may bind ubiquinone. The polypeptide is NADH-quinone oxidoreductase subunit H (Rhizobium rhizogenes (strain K84 / ATCC BAA-868) (Agrobacterium radiobacter)).